A 227-amino-acid chain; its full sequence is Phosphoribosylformylglycinamidine synthase subunit PurQ (227 aa).

The Glutamine amidotransferase type-1 domain maps to 2-226 (KFAVIQFPGS…VKAWKEEQVN (225 aa)). The active-site Nucleophile is the cysteine 86. Residues histidine 195 and glutamate 197 contribute to the active site.

In terms of assembly, part of the FGAM synthase complex composed of 1 PurL, 1 PurQ and 2 PurS subunits.

Its subcellular location is the cytoplasm. The enzyme catalyses N(2)-formyl-N(1)-(5-phospho-beta-D-ribosyl)glycinamide + L-glutamine + ATP + H2O = 2-formamido-N(1)-(5-O-phospho-beta-D-ribosyl)acetamidine + L-glutamate + ADP + phosphate + H(+). The catalysed reaction is L-glutamine + H2O = L-glutamate + NH4(+). It functions in the pathway purine metabolism; IMP biosynthesis via de novo pathway; 5-amino-1-(5-phospho-D-ribosyl)imidazole from N(2)-formyl-N(1)-(5-phospho-D-ribosyl)glycinamide: step 1/2. Part of the phosphoribosylformylglycinamidine synthase complex involved in the purines biosynthetic pathway. Catalyzes the ATP-dependent conversion of formylglycinamide ribonucleotide (FGAR) and glutamine to yield formylglycinamidine ribonucleotide (FGAM) and glutamate. The FGAM synthase complex is composed of three subunits. PurQ produces an ammonia molecule by converting glutamine to glutamate. PurL transfers the ammonia molecule to FGAR to form FGAM in an ATP-dependent manner. PurS interacts with PurQ and PurL and is thought to assist in the transfer of the ammonia molecule from PurQ to PurL. The polypeptide is Phosphoribosylformylglycinamidine synthase subunit PurQ (Listeria monocytogenes serotype 4a (strain HCC23)).